Reading from the N-terminus, the 463-residue chain is Nuclear hormone receptor family member nhr-79 (463 aa).

Positions 3–81 (RGKCMVCDSP…AGMMRDLVQA (79 aa)) form a DNA-binding region, nuclear receptor. 2 NR C4-type zinc fingers span residues 6-27 (CMVCDSPNATNYHFGAQSCKAC) and 43-64 (CLGDGVHSCKIDHTLRLNCRHC). The interval 83 to 119 (REIKSDKGKNSRNSSQSEDFFSPPPEQPGPSNYFDQF) is disordered. In terms of domain architecture, NR LBD spans 203-463 (YTEQVINLNM…ILKDMLKFQY (261 aa)).

It belongs to the nuclear hormone receptor family.

The protein localises to the nucleus. In terms of biological role, orphan nuclear receptor. In Caenorhabditis elegans, this protein is Nuclear hormone receptor family member nhr-79 (nhr-79).